A 372-amino-acid chain; its full sequence is Aminomethyltransferase (372 aa).

The protein belongs to the GcvT family. As to quaternary structure, the glycine cleavage system is composed of four proteins: P, T, L and H.

It carries out the reaction N(6)-[(R)-S(8)-aminomethyldihydrolipoyl]-L-lysyl-[protein] + (6S)-5,6,7,8-tetrahydrofolate = N(6)-[(R)-dihydrolipoyl]-L-lysyl-[protein] + (6R)-5,10-methylene-5,6,7,8-tetrahydrofolate + NH4(+). The glycine cleavage system catalyzes the degradation of glycine. This is Aminomethyltransferase from Streptomyces avermitilis (strain ATCC 31267 / DSM 46492 / JCM 5070 / NBRC 14893 / NCIMB 12804 / NRRL 8165 / MA-4680).